The following is a 498-amino-acid chain: DEAD-box ATP-dependent RNA helicase 6 (498 aa).

Residues 1–109 (MDPRARYPPG…WKAQLKLPPQ (109 aa)) form a disordered region. The span at 33 to 49 (QHQHQHQQPPHPHHHQY) shows a compositional bias: basic residues. Low complexity-rich tracts occupy residues 50–61 (VQRQPQPQQTPH) and 75–86 (AAEAAGASEQKA). Positions 124 to 152 (NEFEDYFLKRELLMGIYEKGFERPSPIQE) match the Q motif motif. Positions 155–325 (IPIALTGSDI…DKYLPKPYVI (171 aa)) constitute a Helicase ATP-binding domain. 168-175 (AKNGTGKT) contributes to the ATP binding site. The DEAD box motif lies at 273 to 276 (DEAD). A Helicase C-terminal domain is found at 335–495 (GITQFYAFVE…PIPPQIDRAI (161 aa)).

Belongs to the DEAD box helicase family. DDX6/DHH1 subfamily.

The protein resides in the cytoplasm. The protein localises to the P-body. The catalysed reaction is ATP + H2O = ADP + phosphate + H(+). In terms of biological role, ATP-dependent RNA helicase involved in mRNA turnover, and more specifically in mRNA decapping. The sequence is that of DEAD-box ATP-dependent RNA helicase 6 from Oryza sativa subsp. japonica (Rice).